The sequence spans 529 residues: MNNVRPIRRALLSVSDKTGILEFAQALHAQGVELLSTGGTAKLLADNNIPVMEVSDYTGHPEIMDGRVKTLHPKIHGGILARRGIDEIVMEQNAIKPIDLVTVNLYPFAETVAKPGCTLADAVENIDIGGPTMVRSTAKNHKDTTIVVNAKDYGRVIAEMQANNGSTTLETRFDLAIAAFEHTAAYDGMIANYFGTMVPAHSNDECHDDSTFPRTFNSQFVKKQDLRYGENSHQKAAFYVDTQIDEASVASAIQLQGKALSYNNIADTDSALECVKEFEGPACVIVKHANPCGVALGANLLEAYDRAFKTDPTSAFGGIIAFNQELDAQTAQAIVDRQFVEVIIAPKVSQAARDIIAAKANVRLLECGEWNTKTTTLDYKRVNGGLLIQDRDQGMVNLEDVKVVSKRQPTAEQLKDLMFCWKVAKFVKSNAIVYAKDGMTIGVGAGQMSRVYSAKIAGIKAADEGLVVENSVMASDAFFPFRDGIDAAAAAGISCIIQPGGSIRDEEIIAAADEHGMAMVFTGMRHFRH.

The MGS-like domain occupies 1–148; sequence MNNVRPIRRA…KNHKDTTIVV (148 aa).

This sequence belongs to the PurH family.

It catalyses the reaction (6R)-10-formyltetrahydrofolate + 5-amino-1-(5-phospho-beta-D-ribosyl)imidazole-4-carboxamide = 5-formamido-1-(5-phospho-D-ribosyl)imidazole-4-carboxamide + (6S)-5,6,7,8-tetrahydrofolate. It carries out the reaction IMP + H2O = 5-formamido-1-(5-phospho-D-ribosyl)imidazole-4-carboxamide. It functions in the pathway purine metabolism; IMP biosynthesis via de novo pathway; 5-formamido-1-(5-phospho-D-ribosyl)imidazole-4-carboxamide from 5-amino-1-(5-phospho-D-ribosyl)imidazole-4-carboxamide (10-formyl THF route): step 1/1. The protein operates within purine metabolism; IMP biosynthesis via de novo pathway; IMP from 5-formamido-1-(5-phospho-D-ribosyl)imidazole-4-carboxamide: step 1/1. The protein is Bifunctional purine biosynthesis protein PurH of Shewanella frigidimarina (strain NCIMB 400).